We begin with the raw amino-acid sequence, 527 residues long: Coproporphyrinogen III oxidase (527 aa).

Positions 1–14 are enriched in low complexity; it reads MSTTDRVTTPTPTV. The interval 1–23 is disordered; sequence MSTTDRVTTPTPTVSGTDAPGPD. Residues 33-38, 56-57, Lys64, and 78-81 each bind FAD; these read GGGITG, ES, and GPDS. The disordered stretch occupies residues 231–267; the sequence is RRAARQRAAQNNAQQNSSHQNSTGQNNSAGTRGPAAS. Low complexity predominate over residues 236-252; it reads QRAAQNNAQQNSSHQNS. FAD contacts are provided by residues Val300, Trp448, and 487–489; that span reads VGL.

The protein belongs to the protoporphyrinogen/coproporphyrinogen oxidase family. Coproporphyrinogen III oxidase subfamily. The cofactor is FAD.

The protein localises to the cytoplasm. The enzyme catalyses coproporphyrinogen III + 3 O2 = coproporphyrin III + 3 H2O2. The protein operates within porphyrin-containing compound metabolism; protoheme biosynthesis. In terms of biological role, involved in coproporphyrin-dependent heme b biosynthesis. Catalyzes the oxidation of coproporphyrinogen III to coproporphyrin III. The polypeptide is Coproporphyrinogen III oxidase (Propionibacterium freudenreichii subsp. freudenreichii).